Here is a 297-residue protein sequence, read N- to C-terminus: Palmitoyl-protein thioesterase ABHD10, mitochondrial (297 aa).

Residues 1-43 constitute a mitochondrion transit peptide; the sequence is MAAWVPCRKWGWAAVSFGRHRGLIASLARKPPWAWWLSACRQK. One can recognise an AB hydrolase-1 domain in the interval 69 to 181; it reads IIFIPGYLSN…GVVTQFHSLP (113 aa). Residues Ser143, Asp240, and His270 each act as charge relay system in the active site.

Belongs to the AB hydrolase superfamily. As to expression, expressed in epididymal sperm but not in testicular sperm (at protein level).

It is found in the mitochondrion. It catalyses the reaction S-hexadecanoyl-L-cysteinyl-[protein] + H2O = L-cysteinyl-[protein] + hexadecanoate + H(+). It carries out the reaction mycophenolic acid O-acyl-beta-D-glucuronide + H2O = mycophenolate + D-glucuronate + H(+). Its activity is regulated as follows. Inhibited by palmostatin-B. Acts as an acyl-protein thioesterase that hydrolyzes fatty acids from acylated residues in proteins. Regulates the mitochondrial S-depalmitoylation of the nucleophilic active site residue of peroxiredoxin-5/PRDX5, a key antioxidant protein, therefore modulating mitochondrial antioxidant ability. Also catalyzes the deglucuronidation of mycophenolic acid acyl-glucuronide, an active metabolite of the immunosuppressant drug mycophenolate. The polypeptide is Palmitoyl-protein thioesterase ABHD10, mitochondrial (Rattus norvegicus (Rat)).